The primary structure comprises 201 residues: NADH-ubiquinone oxidoreductase 21.3 kDa subunit (201 aa).

As to quaternary structure, complex I is composed of about 40 different subunits.

It localises to the mitochondrion inner membrane. The enzyme catalyses a ubiquinone + NADH + 5 H(+)(in) = a ubiquinol + NAD(+) + 4 H(+)(out). Transfer of electrons from NADH to the respiratory chain. The immediate electron acceptor for the enzyme is believed to be ubiquinone. The protein is NADH-ubiquinone oxidoreductase 21.3 kDa subunit of Neurospora crassa (strain ATCC 24698 / 74-OR23-1A / CBS 708.71 / DSM 1257 / FGSC 987).